The following is a 600-amino-acid chain: FERM domain-containing protein 3 (600 aa).

Residues Met31 to Lys311 enclose the FERM domain. The interval Ser413 to Arg440 is disordered. The chain crosses the membrane as a helical span at residues Leu534–Glu554.

The protein resides in the membrane. This chain is FERM domain-containing protein 3 (frmd3), found in Xenopus tropicalis (Western clawed frog).